A 313-amino-acid chain; its full sequence is Ornithine carbamoyltransferase (313 aa).

Carbamoyl phosphate contacts are provided by residues 61–64, glutamine 88, arginine 112, and 139–142; these read STRT and HPCQ. L-ornithine contacts are provided by residues asparagine 170, aspartate 228, and 232–233; that span reads SM. Residues 268-269 and arginine 296 contribute to the carbamoyl phosphate site; that span reads CL.

It belongs to the aspartate/ornithine carbamoyltransferase superfamily. OTCase family.

The protein localises to the cytoplasm. The enzyme catalyses carbamoyl phosphate + L-ornithine = L-citrulline + phosphate + H(+). Its pathway is amino-acid biosynthesis; L-arginine biosynthesis; L-arginine from L-ornithine and carbamoyl phosphate: step 1/3. Its function is as follows. Reversibly catalyzes the transfer of the carbamoyl group from carbamoyl phosphate (CP) to the N(epsilon) atom of ornithine (ORN) to produce L-citrulline. In Bordetella avium (strain 197N), this protein is Ornithine carbamoyltransferase.